Here is a 2080-residue protein sequence, read N- to C-terminus: Dysferlin (2080 aa).

The 101-residue stretch at 1-101 folds into the C2 1 domain; that stretch reads MLRVFILYAE…LATPSLSASF (101 aa). Residues 1 to 2046 are Cytoplasmic-facing; the sequence is MLRVFILYAE…FILWRRFRWA (2046 aa). Ca(2+) is bound by residues Asp18, Ile19, Asp21, and Asn40. The span at 132-144 shows a compositional bias: pro residues; sequence LFPPPTPLEPSPT. Residues 132–215 form a disordered region; sequence LFPPPTPLEP…APTSRKLLSD (84 aa). Positions 155–172 are enriched in acidic residues; it reads GGEEDTEDQGLTGDEAEP. Position 166 is a phosphothreonine (Thr166). Residues Thr166 and Gly167 each carry the phosphoserine modification. A phosphothreonine mark is found at Tyr197 and Pro198. C2 domains follow at residues 203 to 321, 360 to 496, 1136 to 1262, 1310 to 1438, 1561 to 1679, and 1795 to 1943; these read KRSA…RKWL, DKED…EEEP, GVNR…PLTR, PPPQ…AESP, PMPP…ARCG, and GRPG…KKCS. The Ca(2+) site is built by Asp1168, Asp1174, Asp1230, and Asp1232. Ca(2+) contacts are provided by Asp1594, Asp1600, Asp1649, Asp1651, Asp1914, Ser1917, and Asp1920. Residues 1995-2017 form a disordered region; it reads SEHEERPAGQGRDEPNMNPKLED. The chain crosses the membrane as a helical span at residues 2047-2067; the sequence is IILFIILFILLLFLAIFIYAF. At 2068–2080 the chain is on the extracellular side; it reads PNYAAMKLVKPFS.

It belongs to the ferlin family. As to quaternary structure, interacts with CACNA1S. Interacts with ANXA1; the interaction is Ca(2+)- and injury state-dependent. Interacts with ANXA2; the interaction is Ca(2+)- and injury state-dependent. Interacts with CACNA1S and PARVB. Interacts with TRIM72/MG53; interaction is required for transport to sites of cell injury during repair patch formation. Interacts with RIPOR2; this interaction occurs during early myogenic differentiation. Interacts with CAV3 and PARVB. Interacts with AHNAK; the interaction is direct and Ca(2+)-independent. Interacts with AHNAK2; the interaction is direct and Ca(2+)-independent. Ca(2+) is required as a cofactor. In terms of tissue distribution, expressed in skeletal muscle, myoblast, myotube and in the syncytiotrophoblast (STB) of the placenta (at protein level). Ubiquitous. Highly expressed in skeletal muscle. Also found in heart, brain, spleen, intestine, placenta and at lower levels in liver, lung, kidney and pancreas.

The protein resides in the cell membrane. Its subcellular location is the sarcolemma. The protein localises to the cytoplasmic vesicle membrane. Functionally, key calcium ion sensor involved in the Ca(2+)-triggered synaptic vesicle-plasma membrane fusion. Plays a role in the sarcolemma repair mechanism of both skeletal muscle and cardiomyocytes that permits rapid resealing of membranes disrupted by mechanical stress. The sequence is that of Dysferlin (DYSF) from Homo sapiens (Human).